The primary structure comprises 198 residues: Peptidyl-tRNA hydrolase (198 aa).

Tyr15 provides a ligand contact to tRNA. His20 acts as the Proton acceptor in catalysis. TRNA-binding residues include Phe65, Asn67, and Asn113.

This sequence belongs to the PTH family. In terms of assembly, monomer.

It localises to the cytoplasm. The enzyme catalyses an N-acyl-L-alpha-aminoacyl-tRNA + H2O = an N-acyl-L-amino acid + a tRNA + H(+). Hydrolyzes ribosome-free peptidyl-tRNAs (with 1 or more amino acids incorporated), which drop off the ribosome during protein synthesis, or as a result of ribosome stalling. Its function is as follows. Catalyzes the release of premature peptidyl moieties from peptidyl-tRNA molecules trapped in stalled 50S ribosomal subunits, and thus maintains levels of free tRNAs and 50S ribosomes. This chain is Peptidyl-tRNA hydrolase, found in Ehrlichia chaffeensis (strain ATCC CRL-10679 / Arkansas).